The sequence spans 187 residues: Ubiquinol-cytochrome c reductase iron-sulfur subunit (187 aa).

Residues 15–35 form a helical membrane-spanning segment; sequence LYYATAGAGAVATGAAVWPLI. A Rieske domain is found at 89 to 185; that stretch reads QLGQLVDTNA…AKFIDETTIQ (97 aa). The [2Fe-2S] cluster site is built by Cys-129, His-131, Cys-149, and His-152. Cys-134 and Cys-151 form a disulfide bridge.

This sequence belongs to the Rieske iron-sulfur protein family. In terms of assembly, the main subunits of complex b-c1 are: cytochrome b, cytochrome c1 and the Rieske protein. Requires [2Fe-2S] cluster as cofactor.

It localises to the cell membrane. It carries out the reaction a quinol + 2 Fe(III)-[cytochrome c](out) = a quinone + 2 Fe(II)-[cytochrome c](out) + 2 H(+)(out). Its function is as follows. Component of the ubiquinol-cytochrome c reductase complex (complex III or cytochrome b-c1 complex), which is a respiratory chain that generates an electrochemical potential coupled to ATP synthesis. This is Ubiquinol-cytochrome c reductase iron-sulfur subunit (petA) from Cereibacter sphaeroides (Rhodobacter sphaeroides).